Here is an 85-residue protein sequence, read N- to C-terminus: UPF0386 protein TM1040_0419 (85 aa).

Residues 62–85 form a disordered region; it reads SKSSRPYQISEKGRRSVRAQLDNR.

The protein belongs to the UPF0386 family.

This chain is UPF0386 protein TM1040_0419, found in Ruegeria sp. (strain TM1040) (Silicibacter sp.).